The primary structure comprises 269 residues: Hydroxyethylthiazole kinase (269 aa).

Substrate is bound at residue methionine 46. The ATP site is built by arginine 122 and threonine 168. Substrate is bound at residue glycine 195.

Belongs to the Thz kinase family. The cofactor is Mg(2+).

It catalyses the reaction 5-(2-hydroxyethyl)-4-methylthiazole + ATP = 4-methyl-5-(2-phosphooxyethyl)-thiazole + ADP + H(+). The protein operates within cofactor biosynthesis; thiamine diphosphate biosynthesis; 4-methyl-5-(2-phosphoethyl)-thiazole from 5-(2-hydroxyethyl)-4-methylthiazole: step 1/1. In terms of biological role, catalyzes the phosphorylation of the hydroxyl group of 4-methyl-5-beta-hydroxyethylthiazole (THZ). The sequence is that of Hydroxyethylthiazole kinase from Chloroflexus aurantiacus (strain ATCC 29366 / DSM 635 / J-10-fl).